We begin with the raw amino-acid sequence, 382 residues long: uncharacterized protein (382 aa).

The next 11 helical transmembrane spans lie at 8-28 (VMLL…LNTL), 45-65 (MVSS…GYLI), 75-95 (YLAS…VGFW), 102-122 (FIAG…LMCS), 131-151 (LLAA…LLVS), 157-177 (LLHV…PLLF), 204-224 (LGVN…GLMP), 231-251 (GMAN…GILG), 274-294 (VVIL…ALFI), 325-345 (ALLL…AMLM), and 349-369 (SDNL…LMLL).

The protein belongs to the major facilitator superfamily. YcaD (TC 2.A.1.26) family.

Its subcellular location is the cell inner membrane. This is an uncharacterized protein from Salmonella gallinarum (strain 287/91 / NCTC 13346).